The sequence spans 321 residues: Endochitinase 1 (321 aa).

A signal peptide spans 1–21 (MSFRALSVFSLFLSYLILGSA). The Chitin-binding type-1 domain maps to 22–64 (EQCGRQAGGALCPGGLCCSQFGWCGNTDDYCKKENGCQSQCSG). Intrachain disulfides connect Cys24–Cys39, Cys33–Cys45, Cys38–Cys52, Cys58–Cys62, Cys93–Cys156, Cys167–Cys175, and Cys274–Cys306. Residues 65 to 98 (SGGDTGGLDSLITRERFDQMLLHRNDGGCPARGF) are hinge. The catalytic stretch occupies residues 99 to 321 (YTYDAFIAAA…YNNGPSVDSM (223 aa)). Glu137 acts as the Proton donor in catalysis.

The protein belongs to the glycosyl hydrolase 19 family. Chitinase class I subfamily.

The protein resides in the vacuole. The catalysed reaction is Random endo-hydrolysis of N-acetyl-beta-D-glucosaminide (1-&gt;4)-beta-linkages in chitin and chitodextrins.. In terms of biological role, defense against chitin-containing fungal pathogens. This chain is Endochitinase 1 (CHIA1), found in Theobroma cacao (Cacao).